The primary structure comprises 687 residues: MGFAVESRSHVKDILGLINAFNEVKKITVDGTTPITVAHVAALARRHDVKVALEAEQCRARVETCSSWVQRKAEDGADIYGVTTGFGACSSRRTNRLSELQESLIRCLLAGVFTKGCAPSVDELPATATRSAMLLRLNSFTYGCSGIRWEVMEALEKLLNSNVSPKVPLRGSVSASGDLIPLAYIAGLLIGKPSVIARIGDDVEVPAPEALSRVGLRPFKLQAKEGLALVNGTSFATAVASTVMYDANVLLLLVETLCGMFCEVIFGREEFAHPLIHKVKPHPGQIESAELLEWLLRSSPFQELSREYYSIDKLKKPKQDRYALRSSPQWLAPLVQTIRDATTTVETEVNSANDNPIIDHANDRALHGANFQGSAVGFYMDYVRIAVAGLGKLLFAQFTELMIEYYSNGLPGNLSLGPDLSVDYGLKGLDIAMAAYSSELQYLANPVTTHVHSAEQHNQDINSLALISARKTEEALDILKLMIASHLTAMCQAVDLRQLEEALVKVVENVVSTLADECGLPNDTKARLLYVAKAVPVYTYLESPCDPTLPLLLGLKQSCFDTILALHKKDGIETDTLVDRLAEFEKRLSDRLENEMTAVRVLYEKKGHKTADNNDALVRIQGSKFLPFYRFVREELDTGVMSARREQTPQEDVQKVFDAIADGRITVPLLHCLQGFLGQPNGCANGV.

The active-site Proton donor/acceptor is tyrosine 80. A cross-link (5-imidazolinone (Ala-Gly)) is located at residues 175-177 (ASG). Position 176 is a 2,3-didehydroalanine (Ser) (serine 176). Asparagine 231, glutamine 319, arginine 325, asparagine 355, lysine 427, glutamate 455, and asparagine 458 together coordinate (E)-cinnamate.

It belongs to the PAL/histidase family. In terms of assembly, homodimer. Homotetramer, dimer of dimers. In terms of processing, contains an active site 4-methylidene-imidazol-5-one (MIO), which is formed autocatalytically by cyclization and dehydration of residues Ala-Ser-Gly.

The protein localises to the cytoplasm. It carries out the reaction L-phenylalanine = L-beta-phenylalanine. It catalyses the reaction L-phenylalanine = (E)-cinnamate + NH4(+). Its pathway is alkaloid biosynthesis; taxol biosynthesis. It participates in phenylpropanoid metabolism; trans-cinnamate biosynthesis; trans-cinnamate from L-phenylalanine: step 1/1. Phenylalanine aminomutase that catalyzes the rearrangement of L-phenylalanine to R-beta-phenylalanine. Catalyzes the first committed step in the biosynthesis of the side chain of the alkaloid taxol (paclitaxel), a widely-used compound with antitumor activity. Also has low phenylalanine ammonia-lyase activity and can catalyze the amination of trans-cinnamate. The sequence is that of Phenylalanine aminomutase (L-beta-phenylalanine forming) (pam) from Taxus chinensis (Chinese yew).